The sequence spans 187 residues: TATA-box-binding protein (187 aa).

A run of 2 repeats spans residues 10–86 (IENV…FDKL) and 101–179 (VQNI…VSRL).

Belongs to the TBP family.

Its function is as follows. General factor that plays a role in the activation of archaeal genes transcribed by RNA polymerase. Binds specifically to the TATA box promoter element which lies close to the position of transcription initiation. The sequence is that of TATA-box-binding protein from Natronomonas pharaonis (strain ATCC 35678 / DSM 2160 / CIP 103997 / JCM 8858 / NBRC 14720 / NCIMB 2260 / Gabara) (Halobacterium pharaonis).